The sequence spans 103 residues: Co-chaperonin GroES (103 aa).

This sequence belongs to the GroES chaperonin family. As to quaternary structure, heptamer of 7 subunits arranged in a ring. Interacts with the chaperonin GroEL.

It is found in the cytoplasm. Together with the chaperonin GroEL, plays an essential role in assisting protein folding. The GroEL-GroES system forms a nano-cage that allows encapsulation of the non-native substrate proteins and provides a physical environment optimized to promote and accelerate protein folding. GroES binds to the apical surface of the GroEL ring, thereby capping the opening of the GroEL channel. This Prochlorococcus marinus (strain MIT 9215) protein is Co-chaperonin GroES.